Here is a 326-residue protein sequence, read N- to C-terminus: Heterodimeric geranylgeranyl pyrophosphate synthase small subunit, chloroplastic (326 aa).

Residues 1 to 33 constitute a chloroplast transit peptide; it reads MLFSGSAIPLSSFCSLPEKPHTLPMKLSPAAIR. Residues lysine 88 and histidine 120 each contribute to the isopentenyl diphosphate site. Aspartate 127 and aspartate 133 together coordinate Mg(2+). Residue arginine 138 participates in dimethylallyl diphosphate binding. Arginine 139 provides a ligand contact to isopentenyl diphosphate. Positions 220 and 258 each coordinate dimethylallyl diphosphate. Positions 274–301 form a coiled coil; that stretch reads GAEKGMMEMAEELKEKAKKELQVFDNKY.

It belongs to the FPP/GGPP synthase family. In terms of assembly, part of a heterodimeric geranyl(geranyl)diphosphate synthase. Interacts with GGPPS1 or GGPPS2, but not with GGPPS9. Interacts with LIL3.1 and LIL3.2. The cofactor is Mg(2+). In terms of tissue distribution, expressed ubiquitously.

Its subcellular location is the plastid. It localises to the chloroplast thylakoid membrane. Its function is as follows. Heterodimeric geranyl(geranyl)-diphosphate (GPP) synthase small subunit. The small subunit alone is inactive in vitro while the large subunit GGPPS1 catalyzes mainly the production of geranygeranyl-diphosphate in vitro. Upon association of the two subunits, the product profile changes and the production of gerany-diphosphate is strongly increased. The chain is Heterodimeric geranylgeranyl pyrophosphate synthase small subunit, chloroplastic (GGR) from Arabidopsis thaliana (Mouse-ear cress).